Reading from the N-terminus, the 103-residue chain is MTTLTKADLAELLFEKVGLNKREAKDVVESFFDEIRLALEKGDIVKLSGFGNFQCREKPQRPGRNPKTGEEMPISARRVVTFHASQKLKSQVEGARIGTPSQE.

The segment at 55-74 is disordered; it reads CREKPQRPGRNPKTGEEMPI.

The protein belongs to the bacterial histone-like protein family. Heterodimer of an alpha and a beta chain.

Its function is as follows. This protein is one of the two subunits of integration host factor, a specific DNA-binding protein that functions in genetic recombination as well as in transcriptional and translational control. This chain is Integration host factor subunit alpha, found in Thiobacillus denitrificans (strain ATCC 25259 / T1).